Consider the following 118-residue polypeptide: Large ribosomal subunit protein bL20 (118 aa).

Belongs to the bacterial ribosomal protein bL20 family.

Functionally, binds directly to 23S ribosomal RNA and is necessary for the in vitro assembly process of the 50S ribosomal subunit. It is not involved in the protein synthesizing functions of that subunit. The protein is Large ribosomal subunit protein bL20 of Proteus mirabilis (strain HI4320).